The sequence spans 151 residues: Cytochrome c-type biogenesis protein CcmE (151 aa).

At 1–8 (MNPQRKKR) the chain is on the cytoplasmic side. The helical; Signal-anchor for type II membrane protein transmembrane segment at 9 to 29 (LFLILGLLAGVAVAVGFALSA) threads the bilayer. The Periplasmic portion of the chain corresponds to 30–151 (LQQNINLFYT…QAASGAEAKP (122 aa)). Heme contacts are provided by H124 and Y128.

The protein belongs to the CcmE/CycJ family.

The protein resides in the cell inner membrane. Functionally, heme chaperone required for the biogenesis of c-type cytochromes. Transiently binds heme delivered by CcmC and transfers the heme to apo-cytochromes in a process facilitated by CcmF and CcmH. This is Cytochrome c-type biogenesis protein CcmE from Pseudomonas putida (strain W619).